We begin with the raw amino-acid sequence, 278 residues long: Tryptophan synthase alpha chain (278 aa).

Active-site proton acceptor residues include Glu50 and Asp61.

This sequence belongs to the TrpA family. In terms of assembly, tetramer of two alpha and two beta chains.

The enzyme catalyses (1S,2R)-1-C-(indol-3-yl)glycerol 3-phosphate + L-serine = D-glyceraldehyde 3-phosphate + L-tryptophan + H2O. Its pathway is amino-acid biosynthesis; L-tryptophan biosynthesis; L-tryptophan from chorismate: step 5/5. In terms of biological role, the alpha subunit is responsible for the aldol cleavage of indoleglycerol phosphate to indole and glyceraldehyde 3-phosphate. This is Tryptophan synthase alpha chain from Rhodopseudomonas palustris (strain HaA2).